The following is a 91-amino-acid chain: Non-specific lipid-transfer protein 1 (91 aa).

Intrachain disulfides connect cysteine 3-cysteine 50, cysteine 13-cysteine 27, cysteine 28-cysteine 73, and cysteine 48-cysteine 87.

It belongs to the plant LTP family.

Plant non-specific lipid-transfer proteins transfer phospholipids as well as galactolipids across membranes. May play a role in wax or cutin deposition in the cell walls of expanding epidermal cells and certain secretory tissues. This is Non-specific lipid-transfer protein 1 from Prunus domestica (Garden plum).